A 510-amino-acid polypeptide reads, in one-letter code: Hepatic triacylglycerol lipase (510 aa).

Residues 1 to 21 (MGNPLQISIFLVFCIFIQSSA) form the signal peptide. Asn-79 is a glycosylation site (N-linked (GlcNAc...) asparagine). Ser-169 (nucleophile) is an active-site residue. Asp-195 functions as the Charge relay system in the catalytic mechanism. Residues 255 to 278 (CHFLELYKHIAEHGLNAITQTIKC) form an essential for determining substrate specificity region. Residue His-280 is the Charge relay system of the active site. The region spanning 353–487 (YHYQFKIQFI…HPSQEKVFVN (135 aa)) is the PLAT domain. The N-linked (GlcNAc...) asparagine glycan is linked to Asn-398.

Belongs to the AB hydrolase superfamily. Lipase family. As to quaternary structure, homodimer.

The protein resides in the secreted. The catalysed reaction is a triacylglycerol + H2O = a diacylglycerol + a fatty acid + H(+). The enzyme catalyses a 1-acyl-sn-glycero-3-phosphocholine + H2O = sn-glycerol 3-phosphocholine + a fatty acid + H(+). It catalyses the reaction a 1,2-diacyl-sn-glycero-3-phosphocholine + H2O = a 2-acyl-sn-glycero-3-phosphocholine + a fatty acid + H(+). It carries out the reaction 1,2,3-tri-(9Z-octadecenoyl)-glycerol + H2O = di-(9Z)-octadecenoylglycerol + (9Z)-octadecenoate + H(+). The catalysed reaction is 1,2-di-(9Z-octadecenoyl)-sn-glycero-3-phosphocholine + H2O = (9Z-octadecenoyl)-sn-glycero-3-phosphocholine + (9Z)-octadecenoate + H(+). The enzyme catalyses 1,2,3-tributanoylglycerol + H2O = dibutanoylglycerol + butanoate + H(+). It catalyses the reaction 1,2-dihexadecanoyl-sn-glycero-3-phosphocholine + H2O = hexadecanoyl-sn-glycero-3-phosphocholine + hexadecanoate + H(+). It carries out the reaction 1,2-di-(9Z-octadecenoyl)-sn-glycerol + H2O = 2-(9Z-octadecenoyl)-glycerol + (9Z)-octadecenoate + H(+). The catalysed reaction is 1,2,3-tri-(9Z-octadecenoyl)-glycerol + H2O = 2,3-di-(9Z)-octadecenoyl-sn-glycerol + (9Z)-octadecenoate + H(+). The enzyme catalyses 1-(9Z-octadecenoyl)-sn-glycero-3-phospho-L-serine + H2O = sn-glycero-3-phospho-L-serine + (9Z)-octadecenoate + H(+). It catalyses the reaction 1-hexadecanoyl-sn-glycero-3-phosphocholine + H2O = sn-glycerol 3-phosphocholine + hexadecanoate + H(+). It carries out the reaction 1,3-di-(9Z-octadecenoyl)-glycerol + H2O = 3-(9Z-octadecenoyl)-sn-glycerol + (9Z)-octadecenoate + H(+). Its function is as follows. Catalyzes the hydrolysis of triglycerides and phospholipids present in circulating plasma lipoproteins, including chylomicrons, intermediate density lipoproteins (IDL), low density lipoproteins (LDL) of large size and high density lipoproteins (HDL), releasing free fatty acids (FFA) and smaller lipoprotein particles. Also exhibits lysophospholipase activity. Can hydrolyze both neutral lipid and phospholipid substrates but shows a greater binding affinity for neutral lipid substrates than phospholipid substrates. In native LDL, preferentially hydrolyzes the phosphatidylcholine species containing polyunsaturated fatty acids at sn-2 position. This chain is Hepatic triacylglycerol lipase (Lipc), found in Mus musculus (Mouse).